A 349-amino-acid polypeptide reads, in one-letter code: MAAAWGRFLSRAWLCRTAWQGCGRNYRAALCAELKRPLVIEEVTPRPVQPHEVRVNVHFCGINFADILACQGQYQERHQLPFTPGMEFSGMVLETGTDVSTVKEGDRVIGLPGFSGMAEECITDHKNLWQIPEKVSLREAAALPVSYGTAIFALEHRACTQPGETVLVTAAAGATGLAVIDVATNILQAKVIAAAGSDEKCQLAMQSGAQSSVNYSRGSLKEAVGKLVGSGGVNVVIDMVGGDIFLEALRSLAYEGRIVVVGFAGGTIASVPANLLLLKNVSAMGLYWGRYRQQNFPVFSRSLSSALQYCQEGRIQPHIGEVFELEEVNDAFLHVTQRKSTGKVLLSLK.

Lys-35 is modified (N6-acetyllysine). Lys-200 bears the N6-succinyllysine mark.

Belongs to the zinc-containing alcohol dehydrogenase family. Quinone oxidoreductase subfamily.

This chain is Quinone oxidoreductase-like protein 2, found in Bos taurus (Bovine).